Consider the following 193-residue polypeptide: Protein SINE3 (193 aa).

Positions 15–35 (SELGAKRLKDPEMKNRKVTTE) are disordered. Residues 18 to 35 (GAKRLKDPEMKNRKVTTE) are compositionally biased toward basic and acidic residues. Residues 155–193 (VTVKFRIVLLSFILWAILAAIVVFFSSGEERAYRGPLPT) form the KASH domain. A helical transmembrane segment spans residues 161 to 181 (IVLLSFILWAILAAIVVFFSS). Positions 190–193 (PLPT) match the Required for nuclear localization motif.

Interacts with SUN1 and SUN2.

It localises to the nucleus membrane. The polypeptide is Protein SINE3 (Arabidopsis thaliana (Mouse-ear cress)).